Here is a 335-residue protein sequence, read N- to C-terminus: MFLDQITIELRAGKGGNGVVAWRKEKYLPKGGPYGGNGGVGGSIIIESATHVYSFESYRNIRFLKAEDGRPGATNNRSGKNGKDLVLIVPEGTLLRDVETKEILYDFAKSGERLVVCRGGKGGKGNTFFKTSTNRAPTKATPGKPGEIRQVELELKLIADIGLVGFPNAGKSTLFNTLARTEVKVGAYPFTTLQPVLGLVPCQEKLYQKPWIIADIPGIIEGAHQNRGLGLDFLRHIERTRLLLFVIDICGCERSSPEEDLRILMDELVHYREDLADKNRIIALNKIDDLLPDERQERLESFQKLFPSETFVLVSGLTGEGVDLLNSLFTNKLAV.

The Obg domain maps to 1–158 (MFLDQITIEL…RQVELELKLI (158 aa)). The OBG-type G domain occupies 159-334 (ADIGLVGFPN…LNSLFTNKLA (176 aa)). GTP contacts are provided by residues 165 to 172 (GFPNAGKS), 190 to 194 (FTTLQ), 215 to 218 (DIPG), 285 to 288 (NKID), and 315 to 317 (SGL). Positions 172 and 192 each coordinate Mg(2+).

It belongs to the TRAFAC class OBG-HflX-like GTPase superfamily. OBG GTPase family. As to quaternary structure, monomer. Requires Mg(2+) as cofactor.

It localises to the cytoplasm. An essential GTPase (4.1 pmol GTP/min). Cannot substitute endogenous obg in E.coli, has a partially dominant-negative phenotype upon overexpression in liquid culture leading to decreased growth rate in a concentration-dependent fashion, with 50% of cells being elongated. Binds GTP, GDP and possibly (p)ppGpp with moderate affinity, with high nucleotide exchange rates and a fairly low GTP hydrolysis rate. It may play a role in control of the cell cycle, stress response, ribosome biogenesis and in those bacteria that undergo differentiation, in morphogenesis control. The sequence is that of GTPase Obg from Chlamydia abortus (strain DSM 27085 / S26/3) (Chlamydophila abortus).